The primary structure comprises 216 residues: EFFIHYLRKDGPDKWEKSEKVNSTQSFYTLHGLQPGSQYRLKIDFNNTKWEQEIQTAGARVMEVKSGFVTESWFIGLISALVLLLLVLLILCFIKRSKGGKYSVKEKEEGQIDSEARPMNNEAFGEYRSLESDNEEKRTASQPSLCEDSKLCTDDGLDDYANSNSVQTEVIMDESLASQSSGVRDVPDAETQESSPLNPATAISHHGLPNSAALLD.

Residues 1–64 (EFFIHYLRKD…QTAGARVMEV (64 aa)) form the Fibronectin type-III domain. The Extracellular segment spans residues 1 to 73 (EFFIHYLRKD…VKSGFVTESW (73 aa)). N-linked (GlcNAc...) asparagine glycosylation is found at Asn-22 and Asn-46. A helical transmembrane segment spans residues 74-94 (FIGLISALVLLLLVLLILCFI). The Cytoplasmic portion of the chain corresponds to 95–216 (KRSKGGKYSV…GLPNSAALLD (122 aa)). 2 disordered regions span residues 127–149 (YRSLESDNEEKRTASQPSLCEDS) and 173–216 (DESL…ALLD). Residues 128 to 139 (RSLESDNEEKRT) show a composition bias toward basic and acidic residues.

This sequence belongs to the immunoglobulin superfamily. L1/neurofascin/NgCAM family. Expressed in many postmitotic neurons in 16-36 hours embryos. Little or no expression in the olfactory placode, the anterior lateral line/acoustic ganglia complex, the posterior lateral line ganglion, late-developing hindbrain neurons and some Rohon-Beard cells in the spinal cord.

Its subcellular location is the cell membrane. It localises to the cell projection. The protein localises to the growth cone. Functionally, cell adhesion molecule with an important role in the development of the nervous system. Involved in neuron-neuron adhesion, neurite fasciculation, outgrowth of neurites, etc. Binds to axonin on neurons. This is Neural cell adhesion molecule L1.2 (nadl1.2) from Danio rerio (Zebrafish).